The primary structure comprises 274 residues: Dermonecrotic toxin LspiSicTox-betaIII2 (274 aa).

His5 is an active-site residue. Residues Glu25 and Asp27 each contribute to the Mg(2+) site. Residue His41 is the Nucleophile of the active site. Intrachain disulfides connect Cys45–Cys51 and Cys47–Cys189. Mg(2+) is bound at residue Asp85.

It belongs to the arthropod phospholipase D family. Class II subfamily. It depends on Mg(2+) as a cofactor. Expressed by the venom gland.

It localises to the secreted. The catalysed reaction is an N-(acyl)-sphingosylphosphocholine = an N-(acyl)-sphingosyl-1,3-cyclic phosphate + choline. It catalyses the reaction an N-(acyl)-sphingosylphosphoethanolamine = an N-(acyl)-sphingosyl-1,3-cyclic phosphate + ethanolamine. The enzyme catalyses a 1-acyl-sn-glycero-3-phosphocholine = a 1-acyl-sn-glycero-2,3-cyclic phosphate + choline. It carries out the reaction a 1-acyl-sn-glycero-3-phosphoethanolamine = a 1-acyl-sn-glycero-2,3-cyclic phosphate + ethanolamine. In terms of biological role, dermonecrotic toxins cleave the phosphodiester linkage between the phosphate and headgroup of certain phospholipids (sphingolipid and lysolipid substrates), forming an alcohol (often choline) and a cyclic phosphate. This toxin acts on sphingomyelin (SM). It may also act on ceramide phosphoethanolamine (CPE), lysophosphatidylcholine (LPC) and lysophosphatidylethanolamine (LPE), but not on lysophosphatidylserine (LPS), and lysophosphatidylglycerol (LPG). It acts by transphosphatidylation, releasing exclusively cyclic phosphate products as second products. Induces dermonecrosis, hemolysis, increased vascular permeability, edema, inflammatory response, and platelet aggregation. This Loxosceles spinulosa (Recluse spider) protein is Dermonecrotic toxin LspiSicTox-betaIII2.